Consider the following 540-residue polypeptide: Chaperonin GroEL 4 (540 aa).

ATP is bound by residues 29-32 (TLGP), 86-90 (DGTTT), G413, 477-479 (NAA), and D493.

This sequence belongs to the chaperonin (HSP60) family. Forms a cylinder of 14 subunits composed of two heptameric rings stacked back-to-back. Interacts with the co-chaperonin GroES.

It localises to the cytoplasm. The enzyme catalyses ATP + H2O + a folded polypeptide = ADP + phosphate + an unfolded polypeptide.. Together with its co-chaperonin GroES, plays an essential role in assisting protein folding. The GroEL-GroES system forms a nano-cage that allows encapsulation of the non-native substrate proteins and provides a physical environment optimized to promote and accelerate protein folding. The polypeptide is Chaperonin GroEL 4 (Frankia alni (strain DSM 45986 / CECT 9034 / ACN14a)).